The chain runs to 7913 residues: Nonribosomal peptide synthetase dtxS1 (7913 aa).

The segment at F263–R662 is adenylation 1. A Carrier 1 domain is found at Q789–T865. S826 carries the O-(pantetheine 4'-phosphoryl)serine modification. The condensation 1 stretch occupies residues Q903 to L1171. The tract at residues L1332–R1740 is adenylation 2. One can recognise a Carrier 2 domain in the interval Q1865–G1941. S1902 bears the O-(pantetheine 4'-phosphoryl)serine mark. Positions P1965–S2249 are condensation 2. The segment at L2863 to R3255 is adenylation 3. The region spanning Q3380–L3456 is the Carrier 3 domain. S3417 is modified (O-(pantetheine 4'-phosphoryl)serine). A condensation 3 region spans residues D3496–L3761. Residues D3924–R4321 form an adenylation 4 region. Polar residues predominate over residues E4439–P4450. The interval E4439–E4459 is disordered. A Carrier 4 domain is found at Q4453–G4529. O-(pantetheine 4'-phosphoryl)serine is present on S4490. The condensation 4 stretch occupies residues Q4545–I4837. Residues F5006 to R5405 form an adenylation 5 region. Residues Q5933 to K6009 enclose the Carrier 5 domain. S5970 bears the O-(pantetheine 4'-phosphoryl)serine mark. Residues V6023–V6315 are condensation 5. An adenylation 6 region spans residues F6481–N6766. Positions Q7394–E7470 constitute a Carrier 6 domain. S7431 is subject to O-(pantetheine 4'-phosphoryl)serine. The tract at residues E7501–N7771 is condensation 6.

This sequence belongs to the NRP synthetase family.

The protein operates within secondary metabolite biosynthesis. Its function is as follows. Nonribosomal peptide synthetase; part of the gene cluster that mediates the biosynthesis of destruxins, insecticidal cyclic hexadepsipeptides which induce flaccid paralysis and visceral muscle contraction in insects through targeting the calcium channels and vacuolar-type ATPases. The aldo-keto reductase dtxS3 converts alpha-ketoisocaproic acid from deaminated leucine into alpha-hydroxyisocaproic acid (HIC), which is the first substrate for destruxin assembly by dtxS1. L-aspartate decarboxylase dtxS4 converts aspartic acid into beta-alanine, the last substrate for the destruxin assembly line performed by dtxS1. The nonribosomal peptide synthetase dtxS1 synthesizes destruxins B and B2, whereas the cytochrome P450 monooxygenase dtxS2 is required to convert destruxin B into other destruxin derivatives, including destructins C, D, A and E. Destruxin E-diol (ED) is further produced in a non-enzymatic manner from destruxin E. Destruxins play an important role in virulence and escape from insect host immune defenses. In Metarhizium robertsii (strain ARSEF 23 / ATCC MYA-3075) (Metarhizium anisopliae (strain ARSEF 23)), this protein is Nonribosomal peptide synthetase dtxS1.